The chain runs to 415 residues: Serine hydroxymethyltransferase (415 aa).

Positions 1–10 are enriched in basic and acidic residues; sequence MERSHIRDVD. The tract at residues 1 to 21 is disordered; it reads MERSHIRDVDPDAADALSSER. (6S)-5,6,7,8-tetrahydrofolate-binding positions include Leu-119 and 123–125; that span reads GHL. Lys-228 carries the post-translational modification N6-(pyridoxal phosphate)lysine. Residue 353 to 355 coordinates (6S)-5,6,7,8-tetrahydrofolate; the sequence is SAF.

The protein belongs to the SHMT family. In terms of assembly, homodimer. Pyridoxal 5'-phosphate serves as cofactor.

It is found in the cytoplasm. It catalyses the reaction (6R)-5,10-methylene-5,6,7,8-tetrahydrofolate + glycine + H2O = (6S)-5,6,7,8-tetrahydrofolate + L-serine. The protein operates within one-carbon metabolism; tetrahydrofolate interconversion. It participates in amino-acid biosynthesis; glycine biosynthesis; glycine from L-serine: step 1/1. In terms of biological role, catalyzes the reversible interconversion of serine and glycine with tetrahydrofolate (THF) serving as the one-carbon carrier. Also exhibits THF-independent aldolase activity toward beta-hydroxyamino acids, producing glycine and aldehydes, via a retro-aldol mechanism. The sequence is that of Serine hydroxymethyltransferase from Haloquadratum walsbyi (strain DSM 16790 / HBSQ001).